The following is a 541-amino-acid chain: Carboxypeptidase Y homolog A (541 aa).

The first 17 residues, 1–17 (MKLLMTGLLASAAVAAA), serve as a signal peptide directing secretion. A propeptide spanning residues 18 to 122 (QEQQVLQAEG…KLQSYDLRVK (105 aa)) is cleaved from the precursor. Intrachain disulfides connect cysteine 177-cysteine 417, cysteine 311-cysteine 325, cysteine 335-cysteine 358, cysteine 342-cysteine 351, and cysteine 380-cysteine 387. Asparagine 208 is a glycosylation site (N-linked (GlcNAc...) asparagine). The active site involves serine 264. Aspartate 456 is a catalytic residue. Residue asparagine 507 is glycosylated (N-linked (GlcNAc...) asparagine). Histidine 518 is an active-site residue.

The protein belongs to the peptidase S10 family.

It is found in the vacuole. The enzyme catalyses Release of a C-terminal amino acid with broad specificity.. Functionally, vacuolar carboxypeptidase involved in degradation of small peptides. Digests preferentially peptides containing an aliphatic or hydrophobic residue in P1' position, as well as methionine, leucine or phenylalanine in P1 position of ester substrate. This chain is Carboxypeptidase Y homolog A (CPYA), found in Arthroderma otae (strain ATCC MYA-4605 / CBS 113480) (Microsporum canis).